The primary structure comprises 277 residues: Probable enoyl-CoA hydratase, mitochondrial (277 aa).

A mitochondrion-targeting transit peptide spans 1-42 (MLKQVIKTVSSSQAPKKYFFKQFCTSTTEKKGRVGLVTLNRP). Residues 85 to 88 (ADIK) and G128 each bind substrate.

The protein belongs to the enoyl-CoA hydratase/isomerase family. Homohexamer; dimer of trimers.

The protein resides in the mitochondrion matrix. It carries out the reaction a (3S)-3-hydroxyacyl-CoA = a (2E)-enoyl-CoA + H2O. It catalyses the reaction a 4-saturated-(3S)-3-hydroxyacyl-CoA = a (3E)-enoyl-CoA + H2O. The enzyme catalyses (3S)-3-hydroxybutanoyl-CoA = (2E)-butenoyl-CoA + H2O. The catalysed reaction is 3-hydroxyisovaleryl-CoA = 3-methylbut-2-enoyl-CoA + H2O. It carries out the reaction 3-hydroxypropanoyl-CoA = acryloyl-CoA + H2O. It catalyses the reaction 3-hydroxybutanoyl-CoA = (2E)-butenoyl-CoA + H2O. Its pathway is lipid metabolism; fatty acid beta-oxidation. Its function is as follows. Straight-chain enoyl-CoA thioesters from C4 up to at least C16 are processed, although with decreasing catalytic rate. The protein is Probable enoyl-CoA hydratase, mitochondrial (echs1) of Dictyostelium discoideum (Social amoeba).